We begin with the raw amino-acid sequence, 405 residues long: Dematin (405 aa).

Disordered stretches follow at residues 1 to 29, 81 to 100, and 108 to 332; these read MERL…SPSS, SREC…PEVW, and IISQ…DRGN. Residues 11–29 show a composition bias toward low complexity; that stretch reads SPGSVSSSRDSSVPGSPSS. Serine 16, serine 18, serine 26, serine 92, serine 96, serine 110, and serine 113 each carry phosphoserine. Low complexity predominate over residues 113-124; that stretch reads STPRTTGTPRTS. A Phosphothreonine modification is found at threonine 114. A phosphoserine mark is found at serine 156 and serine 226. Residues 216-228 are compositionally biased toward acidic residues; it reads EEEEEEEDDDSEE. Residues 224–308 form an interaction with RASGRF2 region; the sequence is DDSEEEIKAI…SRLQSTEFSP (85 aa). 2 stretches are compositionally biased toward basic and acidic residues: residues 229–242 and 252–261; these read EIKA…EELS and ILKEEMEKSL. Phosphoserine occurs at positions 269, 279, 289, 303, 315, 333, 372, and 383. Low complexity predominate over residues 277–292; it reads HTSLHSGTSKSSSLPS. Residues 294 to 322 are compositionally biased toward polar residues; that stretch reads GRTTLSRLQSTEFSPSGSEAGSPGLQNGE. One can recognise an HP domain in the interval 337 to 405; the sequence is VLEQKIYPYE…NELKKKASLF (69 aa). Phosphoserine; by PKA is present on serine 403.

This sequence belongs to the villin/gelsolin family. In terms of assembly, monomeric (isoform 2); under reducing conditions. Self-associates. Exists under oxidizing condition as a trimer of two isoforms 2 and isoform 1 linked by disulfide bonds. Found in a complex with DMTN, F-actin and spectrin. Found in a complex with ADD2, DMTN and SLC2A1. Interacts with F-actin, ITPKB and spectrin. Isoform 2 interacts with SLC2A1 (via C-terminus cytoplasmic region). Interacts with RASGRF2. Post-translationally, phosphorylated. Phosphorylation at Ser-403 by PKA causes the C-terminal headpiece domain to associate with the N-terminal core domain, and leads to the inhibition of its actin bundling activity. As to expression, expressed in platelets. Isoform 1 and isoform 2 are expressed in mature erythrocytes (at protein level).

It is found in the cytoplasm. The protein resides in the cytosol. The protein localises to the perinuclear region. It localises to the cytoskeleton. Its subcellular location is the cell membrane. It is found in the membrane. The protein resides in the endomembrane system. The protein localises to the cell projection. Membrane-cytoskeleton-associated protein with F-actin-binding activity that induces F-actin bundles formation and stabilization. Its F-actin-bundling activity is reversibly regulated upon its phosphorylation by the cAMP-dependent protein kinase A (PKA). Binds to the erythrocyte membrane glucose transporter-1 SLC2A1/GLUT1, and hence stabilizes and attaches the spectrin-actin network to the erythrocytic plasma membrane. Plays a role in maintaining the functional integrity of PKA-activated erythrocyte shape and the membrane mechanical properties. Also plays a role as a modulator of actin dynamics in fibroblasts; acts as a negative regulator of the RhoA activation pathway. In platelets, functions as a regulator of internal calcium mobilization across the dense tubular system that affects platelet granule secretion pathways and aggregation. Also required for the formation of a diverse set of cell protrusions, such as filopodia and lamellipodia, necessary for platelet cell spreading, motility and migration. Acts as a tumor suppressor and inhibits malignant cell transformation. The polypeptide is Dematin (Dmtn) (Mus musculus (Mouse)).